The following is a 328-amino-acid chain: GMP reductase (328 aa).

Residue C176 is the Thioimidate intermediate of the active site. Residue 205 to 228 coordinates NADP(+); it reads IIADGGIRTHGDIAKSIRFGASMI.

It belongs to the IMPDH/GMPR family. GuaC type 2 subfamily.

The enzyme catalyses IMP + NH4(+) + NADP(+) = GMP + NADPH + 2 H(+). Catalyzes the irreversible NADPH-dependent deamination of GMP to IMP. It functions in the conversion of nucleobase, nucleoside and nucleotide derivatives of G to A nucleotides, and in maintaining the intracellular balance of A and G nucleotides. The polypeptide is GMP reductase (Streptococcus pneumoniae (strain P1031)).